We begin with the raw amino-acid sequence, 317 residues long: E3 ubiquitin-protein ligase NRDP1 (317 aa).

Residues 18–57 (CPICSGVLEEPVQAPHCEHAFCNACITQWFSQQQTCPVDR) form an RING-type; degenerate zinc finger. The SIAH-type; degenerate zinc finger occupies 78-138 (KLQIACDNAV…LPNHNCIKHL (61 aa)).

In terms of assembly, interacts with USP8, ERBB3, PRKN and BIRC6. Interacts with CSF2RB, EPOR, IL3RA, MYD88 and TBK1. Interacts with CLEC16A. In terms of processing, autoubiquitinated. Autoubiquitination leads to proteasomal degradation. Deubiquitinated by USP8 to get stabilized which induces apoptosis. In terms of tissue distribution, detected in ovary, testis and prostate.

The enzyme catalyses S-ubiquitinyl-[E2 ubiquitin-conjugating enzyme]-L-cysteine + [acceptor protein]-L-lysine = [E2 ubiquitin-conjugating enzyme]-L-cysteine + N(6)-ubiquitinyl-[acceptor protein]-L-lysine.. It functions in the pathway protein modification; protein ubiquitination. Acts as E3 ubiquitin-protein ligase and regulates the degradation of target proteins. Polyubiquitinates MYD88. Negatively regulates MYD88-dependent production of pro-inflammatory cytokines. Can promote TRIF-dependent production of type I interferon and inhibits infection with vesicular stomatitis virus. Promotes also activation of TBK1 and IRF3. Involved in the ubiquitination of erythropoietin (EPO) and interleukin-3 (IL-3) receptors. Thus, through maintaining basal levels of cytokine receptors, RNF41 is involved in the control of hematopoietic progenitor cell differentiation into myeloerythroid lineages. Contributes to the maintenance of steady-state ERBB3 levels by mediating its growth factor-independent degradation. Involved in the degradation of the inhibitor of apoptosis BIRC6 and thus is an important regulator of cell death by promoting apoptosis. Also acts as a PRKN modifier that accelerates its degradation, resulting in a reduction of PRKN activity, influencing the balance of intracellular redox state. The RNF41-PRKN pathway regulates autophagosome-lysosome fusion during late mitophagy. Mitophagy is a selective form of autophagy necessary for mitochondrial quality control. The protein is E3 ubiquitin-protein ligase NRDP1 (RNF41) of Homo sapiens (Human).